An 827-amino-acid chain; its full sequence is MSSGDVSRRQRVSRACDECHRRKIKCDQRRPCSNCIAYNYECTYGQPFKRLRHAPEKYIEFLELRLKYLRGLAEESDPNLKLPSFLAPPNDKDSPVNQSPWKRSDSSKRSSSQDEFESLFDRYGQLSLKDDGKADFRGSSSGFVFMKNIHQNIARNSTVPNPVQESNSSSSQPDPLSFPYLPPTPAEDEHKKPPLKIQLPPYEEALSIVSQFFMNDHFLVHIHHPASFFEKMHMYYKTGKTDNNFHFLLVATLCLGYTYMPDESPSANYPYHEAYEYYYYIRSSFSWEDSYTIEVVQILLSVALFALFSSRLSQAYTFTNNALLCCHELGLHKDFSDVLTSHESRLSKRVFYSVYVLACYTSTIVGLPLSIEDVDIDQSLPNSFDFTLENDQVPPRLIASECTSLEVFIQHITLSRILSHFVRKVYPVKSPSDSHCKVSLPAVRDHEEKLTYWWKNLPSYLKMSEVPKFSPKWIQAIILELKFRQIELIFYRPFIHSISTPIDNQNGSPMKPANFALKCAQSAERVVFLLQELAKSPNTPKLFFNLYSGYYALMTLTYCATLTKDDANKSNNFITKARLGFHCLQMIYRESTYYSTIMEAIKNLLIAYDMNSSGTENLDATPDVTGQLPNNFSQRTSNIPREFPQAQIFYSDAPYPGYYNPAQFQNAPTNFPMPTYGGRTQDQSYPRQNGYPSYSDGNVYPHDRVMINYGSSMPTANGFYVPNTYSPVPFPYNTSYPPYMSPTSNMPQAFQAYSQYPYQHPPFPLSEQMLPLPTSGVMMAPGAAKSGMPYPFIQPPSMTNQVAYPTVRDGSNNSPDHPSSSNSKRTE.

A DNA-binding region (zn(2)-C6 fungal-type) is located at residues 16 to 42; it reads CDECHRRKIKCDQRRPCSNCIAYNYEC. Disordered regions lie at residues 80–114, 158–193, and 794–827; these read LKLP…SSQD, TVPN…HKKP, and QPPS…KRTE. Residues 102 to 112 show a composition bias toward basic and acidic residues; sequence KRSDSSKRSSS. A Phosphoserine modification is found at Ser-112. Low complexity-rich tracts occupy residues 159–179 and 811–827; these read VPNP…LSFP and SNNS…KRTE.

It belongs to the ASG1 family.

The protein localises to the cytoplasm. Its subcellular location is the nucleus. The sequence is that of Putative transcriptional regulatory protein C16G5.16 from Schizosaccharomyces pombe (strain 972 / ATCC 24843) (Fission yeast).